Here is a 306-residue protein sequence, read N- to C-terminus: UDP-3-O-acyl-N-acetylglucosamine deacetylase (306 aa).

Histidine 79, histidine 238, and aspartate 242 together coordinate Zn(2+). The active-site Proton donor is histidine 265.

It belongs to the LpxC family. Requires Zn(2+) as cofactor.

It carries out the reaction a UDP-3-O-[(3R)-3-hydroxyacyl]-N-acetyl-alpha-D-glucosamine + H2O = a UDP-3-O-[(3R)-3-hydroxyacyl]-alpha-D-glucosamine + acetate. It participates in glycolipid biosynthesis; lipid IV(A) biosynthesis; lipid IV(A) from (3R)-3-hydroxytetradecanoyl-[acyl-carrier-protein] and UDP-N-acetyl-alpha-D-glucosamine: step 2/6. Catalyzes the hydrolysis of UDP-3-O-myristoyl-N-acetylglucosamine to form UDP-3-O-myristoylglucosamine and acetate, the committed step in lipid A biosynthesis. The protein is UDP-3-O-acyl-N-acetylglucosamine deacetylase of Shewanella denitrificans (strain OS217 / ATCC BAA-1090 / DSM 15013).